The following is a 344-amino-acid chain: Anthranilate phosphoribosyltransferase (344 aa).

Residues Gly-80, Gly-83 to Asp-84, Thr-88, Asn-90 to Thr-93, Lys-108 to Ser-116, and Ser-120 each bind 5-phospho-alpha-D-ribose 1-diphosphate. Residue Gly-80 participates in anthranilate binding. Ser-92 lines the Mg(2+) pocket. Position 111 (Asn-111) interacts with anthranilate. Residue Arg-166 participates in anthranilate binding. Residues Asp-225 and Glu-226 each contribute to the Mg(2+) site.

Belongs to the anthranilate phosphoribosyltransferase family. In terms of assembly, homodimer. It depends on Mg(2+) as a cofactor.

It catalyses the reaction N-(5-phospho-beta-D-ribosyl)anthranilate + diphosphate = 5-phospho-alpha-D-ribose 1-diphosphate + anthranilate. Its pathway is amino-acid biosynthesis; L-tryptophan biosynthesis; L-tryptophan from chorismate: step 2/5. Its function is as follows. Catalyzes the transfer of the phosphoribosyl group of 5-phosphorylribose-1-pyrophosphate (PRPP) to anthranilate to yield N-(5'-phosphoribosyl)-anthranilate (PRA). This chain is Anthranilate phosphoribosyltransferase, found in Legionella pneumophila (strain Lens).